A 623-amino-acid chain; its full sequence is Glutathione import ATP-binding protein GsiA (623 aa).

2 ABC transporter domains span residues 15-269 (VENL…RALL) and 314-564 (LRVR…RKLL). ATP-binding positions include 49 to 56 (GESGSGKS) and 357 to 364 (GESGSGKS).

This sequence belongs to the ABC transporter superfamily. Glutathione importer (TC 3.A.1.5.11) family. The complex is composed of two ATP-binding proteins (GsiA), two transmembrane proteins (GsiC and GsiD) and a solute-binding protein (GsiB).

It localises to the cell inner membrane. It catalyses the reaction glutathione(out) + ATP + H2O = glutathione(in) + ADP + phosphate + H(+). Its activity is regulated as follows. Inhibited by verapamil but not by carbonyl cyanide m-chlorophenylhydrazone (CCCP). Its function is as follows. Part of the ABC transporter complex GsiABCD involved in glutathione import. Responsible for energy coupling to the transport system. The protein is Glutathione import ATP-binding protein GsiA of Escherichia coli (strain K12).